The primary structure comprises 552 residues: T-box transcription factor TBX4 (552 aa).

The segment covering 1–14 has biased composition (basic and acidic residues); sequence MLQDKGLSESEEAF. Residues 1–50 are disordered; it reads MLQDKGLSESEEAFRAPGPALGEASNTSTTNAPEPALATPGLSGAALSSP. Positions 76–256 form a DNA-binding region, T-box; sequence LHEKELWKKF…NNPFAKGFRG (181 aa). Ser-514 is subject to Phosphoserine.

It is found in the nucleus. Its function is as follows. Transcriptional regulator that has an essential role in the organogenesis of lungs, pelvis, and hindlimbs. The sequence is that of T-box transcription factor TBX4 (Tbx4) from Mus musculus (Mouse).